The sequence spans 446 residues: Low-affinity gluconate transporter (446 aa).

Position 1 (M1) is a topological domain, cytoplasmic. A helical membrane pass occupies residues 2–22; it reads TTLTLVLTAVGSVLLLLFLVM. The Periplasmic segment spans residues 23–26; it reads KARM. Residues 27-47 form a helical membrane-spanning segment; the sequence is HAFLALMVVSMGAGLFSGMPL. Residues 48-58 lie on the Cytoplasmic side of the membrane; sequence DKIAATMEKGM. Residues 59–79 form a helical membrane-spanning segment; the sequence is GGTLGFLAVVVALGAMFGKIL. Over 80-109 the chain is Periplasmic; that stretch reads HETGAVDQIAVKMLKSFGHSRAHYAIGLAG. Residues 110–130 traverse the membrane as a helical segment; sequence LVCALPLFFEVAIVLLISVAF. Over 131-142 the chain is Cytoplasmic; sequence SMARHTGTNLVK. A helical membrane pass occupies residues 143–163; sequence LVIPLFAGVAAAAAFLVPGPA. Over 164–176 the chain is Periplasmic; it reads PMLLASQMNADFG. A helical membrane pass occupies residues 177 to 197; the sequence is WMILIGLCAAIPGMIIAGPLW. At 198–225 the chain is on the cytoplasmic side; it reads GNFISRYVELHIPDDISEPHLGEGKMPS. A helical membrane pass occupies residues 226-246; the sequence is FGFSLSLILLPLVLVGLKTIA. At 247–261 the chain is on the periplasmic side; sequence ARFVPEGSTAYEWFE. The chain crosses the membrane as a helical span at residues 262 to 282; it reads FIGHPFTAILVACLVAIYGLA. Topologically, residues 283-294 are cytoplasmic; sequence MRQGMPKDKVME. Residues 295–315 traverse the membrane as a helical segment; the sequence is ICGHALQPAGIILLVIGAGGV. Residues 316-330 lie on the Periplasmic side of the membrane; it reads FKQVLVDSGVGPALG. A helical membrane pass occupies residues 331–351; sequence EALTGMGLPIAITCFVLAAAV. A topological domain (cytoplasmic) is located at residue R352. The chain crosses the membrane as a helical span at residues 353–373; that stretch reads IIQGSATVACLTAVGLVMPVI. Topologically, residues 374 to 387 are periplasmic; it reads EQLNYSGAQMAALS. A helical membrane pass occupies residues 388–408; sequence ICIAGGSIVVSHVNDAGFWLF. Residues 409-424 lie on the Cytoplasmic side of the membrane; it reads GKFTGATEAETLKTWT. A helical membrane pass occupies residues 425–445; it reads MMETILGTVGAIVGMIAFQLL. Residue S446 is a topological domain, periplasmic.

Belongs to the GntP permease family.

Its subcellular location is the cell inner membrane. Functionally, part of the gluconate utilization system Gnt-I; low-affinity intake of gluconate. This is Low-affinity gluconate transporter (gntU) from Escherichia coli O157:H7.